Here is a 262-residue protein sequence, read N- to C-terminus: Ornithine carbamoyltransferase (262 aa).

Residues 3-7 (STRTR), Gln30, Arg54, and 81-84 (HPTQ) contribute to the carbamoyl phosphate site. L-ornithine contacts are provided by residues Asn114, Asp178, and 182 to 183 (SM). Carbamoyl phosphate contacts are provided by residues 219-222 (HCLP) and Thr247.

It belongs to the aspartate/ornithine carbamoyltransferase superfamily. OTCase family.

The protein localises to the cytoplasm. It carries out the reaction carbamoyl phosphate + L-ornithine = L-citrulline + phosphate + H(+). It participates in amino-acid biosynthesis; L-arginine biosynthesis; L-arginine from L-ornithine and carbamoyl phosphate: step 1/3. Reversibly catalyzes the transfer of the carbamoyl group from carbamoyl phosphate (CP) to the N(epsilon) atom of ornithine (ORN) to produce L-citrulline. The sequence is that of Ornithine carbamoyltransferase (argF) from Neisseria polysaccharea.